An 804-amino-acid polypeptide reads, in one-letter code: Phenylalanine--tRNA ligase beta subunit (804 aa).

Positions 39-155 (AEGLKKIVVG…ADVKPGEEVY (117 aa)) constitute a tRNA-binding domain. A B5 domain is found at 408–483 (RNPSVVKTTV…RIYGYDNLKS (76 aa)). Residues Asp-461, Asp-467, Glu-470, and Glu-471 each contribute to the Mg(2+) site. Residues 711–804 (PKFPAIERDL…LKESLKIKVR (94 aa)) enclose the FDX-ACB domain.

Belongs to the phenylalanyl-tRNA synthetase beta subunit family. Type 1 subfamily. As to quaternary structure, tetramer of two alpha and two beta subunits. Requires Mg(2+) as cofactor.

The protein localises to the cytoplasm. It carries out the reaction tRNA(Phe) + L-phenylalanine + ATP = L-phenylalanyl-tRNA(Phe) + AMP + diphosphate + H(+). This chain is Phenylalanine--tRNA ligase beta subunit, found in Lactobacillus johnsonii (strain CNCM I-12250 / La1 / NCC 533).